The sequence spans 191 residues: Calcium-activated potassium channel subunit beta-1 (191 aa).

Residues 1-18 are Cytoplasmic-facing; sequence MGKKLVMAQKRGETRALC. Residues 19–39 traverse the membrane as a helical segment; that stretch reads LGVAMVVCAAITYYVLGTTVL. The Extracellular portion of the chain corresponds to 40–155; the sequence is PLYQKSVWTQ…VVYQRLYGPQ (116 aa). Asn80 and Asn142 each carry an N-linked (GlcNAc...) asparagine glycan. A helical membrane pass occupies residues 156–176; sequence VLLFSFFWPTFLLTGGLLLIA. The Cytoplasmic segment spans residues 177 to 191; the sequence is MVKLNRSLSILAAQK.

Belongs to the KCNMB (TC 8.A.14.1) family. KCNMB1 subfamily. Interacts with KCNMA1 tetramer. There are probably 4 molecules of KCMNB1 per KCNMA1 tetramer. N-glycosylated. As to expression, expressed in many tissues containing smooth muscles. In brain and heart, it is not expressed except in the vasculature, such as cerebral arteries, aorta and corona arteries.

Its subcellular location is the membrane. Regulatory subunit of the calcium activated potassium KCNMA1 (maxiK) channel. Modulates the calcium sensitivity and gating kinetics of KCNMA1, thereby contributing to KCNMA1 channel diversity. Increases the apparent Ca(2+)/voltage sensitivity of the KCNMA1 channel. It also modifies KCNMA1 channel kinetics and alters its pharmacological properties. It slows down the activation and the deactivation kinetics of the channel. Acts as a negative regulator of smooth muscle contraction by enhancing the calcium sensitivity to KCNMA1. Its presence is also a requirement for internal binding of the KCNMA1 channel opener dehydrosoyasaponin I (DHS-1) triterpene glycoside and for external binding of the agonist hormone 17-beta-estradiol (E2). Increases the binding activity of charybdotoxin (CTX) toxin to KCNMA1 peptide blocker by increasing the CTX association rate and decreasing the dissociation rate. This Mus musculus (Mouse) protein is Calcium-activated potassium channel subunit beta-1 (Kcnmb1).